The primary structure comprises 142 residues: Small ribosomal subunit protein uS12 (142 aa).

The interval 1-30 (MGKTHGMGAARKLKSHRRTQRWADKSYKKS) is disordered. Over residues 11-20 (RKLKSHRRTQ) the composition is skewed to basic residues. Positions 21–30 (RWADKSYKKS) are enriched in basic and acidic residues. Pro61 carries the post-translational modification Hydroxyproline.

This sequence belongs to the universal ribosomal protein uS12 family.

This chain is Small ribosomal subunit protein uS12 (RPS23), found in Euphorbia esula (Leafy spurge).